Consider the following 478-residue polypeptide: Ribulose bisphosphate carboxylase large chain (478 aa).

A propeptide spanning residues 1–2 (MS) is cleaved from the precursor. Position 3 is an N-acetylproline (proline 3). Residue lysine 14 is modified to N6,N6,N6-trimethyllysine. Residues asparagine 123 and threonine 173 each coordinate substrate. The Proton acceptor role is filled by lysine 175. Residue lysine 177 participates in substrate binding. Mg(2+)-binding residues include lysine 201, aspartate 203, and glutamate 204. Lysine 201 carries the post-translational modification N6-carboxylysine. Residue histidine 294 is the Proton acceptor of the active site. 3 residues coordinate substrate: arginine 295, histidine 327, and serine 379.

This sequence belongs to the RuBisCO large chain family. Type I subfamily. Heterohexadecamer of 8 large chains and 8 small chains; disulfide-linked. The disulfide link is formed within the large subunit homodimers. Mg(2+) is required as a cofactor. In terms of processing, the disulfide bond which can form in the large chain dimeric partners within the hexadecamer appears to be associated with oxidative stress and protein turnover.

It localises to the plastid. The protein localises to the chloroplast. It carries out the reaction 2 (2R)-3-phosphoglycerate + 2 H(+) = D-ribulose 1,5-bisphosphate + CO2 + H2O. The enzyme catalyses D-ribulose 1,5-bisphosphate + O2 = 2-phosphoglycolate + (2R)-3-phosphoglycerate + 2 H(+). In terms of biological role, ruBisCO catalyzes two reactions: the carboxylation of D-ribulose 1,5-bisphosphate, the primary event in carbon dioxide fixation, as well as the oxidative fragmentation of the pentose substrate in the photorespiration process. Both reactions occur simultaneously and in competition at the same active site. This is Ribulose bisphosphate carboxylase large chain from Lemna minor (Common duckweed).